Here is a 250-residue protein sequence, read N- to C-terminus: ATP synthase subunit a (250 aa).

Transmembrane regions (helical) follow at residues 27-47 (FTNA…FLTF), 85-105 (FFPL…VGLI), 115-135 (LIVT…YGFV), 141-161 (FLHL…LVVI), 181-201 (MLAG…LASA), and 223-243 (ELLV…IYLN).

This sequence belongs to the ATPase A chain family. In terms of assembly, F-type ATPases have 2 components, CF(1) - the catalytic core - and CF(0) - the membrane proton channel. CF(1) has five subunits: alpha(3), beta(3), gamma(1), delta(1), epsilon(1). CF(0) has three main subunits: a(1), b(2) and c(9-12). The alpha and beta chains form an alternating ring which encloses part of the gamma chain. CF(1) is attached to CF(0) by a central stalk formed by the gamma and epsilon chains, while a peripheral stalk is formed by the delta and b chains.

The protein resides in the cell inner membrane. In terms of biological role, key component of the proton channel; it plays a direct role in the translocation of protons across the membrane. The polypeptide is ATP synthase subunit a (Xanthobacter autotrophicus (strain ATCC BAA-1158 / Py2)).